A 150-amino-acid chain; its full sequence is Transcriptional repressor NrdR (150 aa).

The disordered stretch occupies residues 1-26 (MKCPFCGNSDSKVVDSRPDKGGSGIR). A zinc finger spans residues 3-34 (CPFCGNSDSKVVDSRPDKGGSGIRRRRECEQC). Positions 49–139 (PLVLKKDGRR…VYRSFRDINE (91 aa)) constitute an ATP-cone domain.

It belongs to the NrdR family. Requires Zn(2+) as cofactor.

Its function is as follows. Negatively regulates transcription of bacterial ribonucleotide reductase nrd genes and operons by binding to NrdR-boxes. This Pelobacter propionicus (strain DSM 2379 / NBRC 103807 / OttBd1) protein is Transcriptional repressor NrdR.